The sequence spans 851 residues: Venom phosphodiesterase (851 aa).

The first 23 residues, 1–23 (MIQQKVLFISLVAVALGLGLGLG), serve as a signal peptide directing secretion. SMB domains lie at 30 to 73 (PQVS…VLPT) and 74 to 118 (QSWS…GETS). 16 cysteine pairs are disulfide-bonded: Cys34-Cys38, Cys34-Cys51, Cys38-Cys69, Cys49-Cys51, Cys49-Cys62, Cys55-Cys61, Cys62-Cys69, Cys78-Cys83, Cys78-Cys95, Cys83-Cys113, Cys93-Cys95, Cys93-Cys106, Cys99-Cys105, Cys106-Cys113, Cys124-Cys170, and Cys132-Cys344. N-linked (GlcNAc...) asparagine glycosylation occurs at Asn39. The Cell attachment site signature appears at 58-60 (RQA). Residues Asp147 and Thr185 each contribute to the a divalent metal cation site. Thr185 serves as the catalytic AMP-threonine intermediate. N-linked (GlcNAc...) asparagine glycosylation is found at Asn216, Asn259, and Asn270. Lys271 contributes to the AMP binding site. Asp305, His309, Asp352, and His353 together coordinate a divalent metal cation. Residue His309 coordinates AMP. 6 disulfides stabilise this stretch: Cys360-Cys457, Cys408-Cys793, Cys541-Cys599, Cys554-Cys654, Cys556-Cys639, and Cys762-Cys772. N-linked (GlcNAc...) asparagine glycosylation is present at Asn405. His462 is a binding site for a divalent metal cation. N-linked (GlcNAc...) asparagine glycans are attached at residues Asn512, Asn594, and Asn745.

This sequence belongs to the nucleotide pyrophosphatase/phosphodiesterase family. In terms of assembly, monomer cleaved in two subunits; disulfide-linked. Is synthesized as a single-chain protein and is subsequently cleaved to form a two-subunit protein held together with disulfide bonds. The cofactor is a divalent metal cation. In terms of tissue distribution, expressed by venom gland.

It localises to the secreted. The enzyme catalyses ADP + H2O = AMP + phosphate + H(+). Its function is as follows. Hydrolyzes ADP with high activity. Shows weak or no activity on 5'-AMP, 5'-GMP, 3'-AMP, ATP, cAMP, and cGMP. Is devoid of monophosphatase and proteinase activities. Dose-dependently inhibits platelet aggregation induced by ADP (IC(50)=0.99 uM) and collagen (IC(50)=1.4 uM). In Macrovipera lebetinus (Levantine viper), this protein is Venom phosphodiesterase.